Here is a 217-residue protein sequence, read N- to C-terminus: Octanoyltransferase (217 aa).

Residues 30 to 209 form the BPL/LPL catalytic domain; the sequence is GNRPPTLLLL…AFAEVFGLRP (180 aa). Substrate-binding positions include 75–82, 139–141, and 152–154; these read RGGDVTYH, AIG, and GFA. Catalysis depends on cysteine 170, which acts as the Acyl-thioester intermediate.

Belongs to the LipB family.

Its subcellular location is the cytoplasm. The enzyme catalyses octanoyl-[ACP] + L-lysyl-[protein] = N(6)-octanoyl-L-lysyl-[protein] + holo-[ACP] + H(+). Its pathway is protein modification; protein lipoylation via endogenous pathway; protein N(6)-(lipoyl)lysine from octanoyl-[acyl-carrier-protein]: step 1/2. In terms of biological role, catalyzes the transfer of endogenously produced octanoic acid from octanoyl-acyl-carrier-protein onto the lipoyl domains of lipoate-dependent enzymes. Lipoyl-ACP can also act as a substrate although octanoyl-ACP is likely to be the physiological substrate. The polypeptide is Octanoyltransferase (Thermus thermophilus (strain ATCC 27634 / DSM 579 / HB8)).